We begin with the raw amino-acid sequence, 634 residues long: Transcription termination factor FttA (634 aa).

The segment at 4 to 69 is KHa; it reads EEVLENIRKE…ISIRPDPSVL (66 aa). The segment at 70-137 is KHb; sequence VEPEIAKQKI…WAPKPVRTPP (68 aa). The metallo-beta-lactamase N-terminus stretch occupies residues 179-381; sequence WIRVSFLGGA…LIIESTYGAY (203 aa). Zn(2+)-binding residues include His240, His242, Asp244, His245, His327, and Asp350. The interval 382–575 is beta-Casp; the sequence is DDVLPEREEA…LQVYTIEGFS (194 aa). The metallo-beta-lactamase C-terminus stretch occupies residues 576–634; the sequence is GHSDRKQLIKYIRRLKPSPEKIIMVHGEESKCLDFADTVRRLFKKQTYVPMNLDAIRVK. His601 is a Zn(2+) binding site.

This sequence belongs to the metallo-beta-lactamase superfamily. RNA-metabolizing metallo-beta-lactamase-like family. FttA subfamily. As to quaternary structure, homodimer. Interacts with RNA polymerase (RNAP), interacts with the Spt4-Spt5 complex. Zn(2+) is required as a cofactor.

Its activity is regulated as follows. Optimal NaCl concentration is 100 mM for nuclease activity on RNA. Terminates transcription on the whole genome. Termination is linked to FttA-mediated RNA cleavage and does not require NTP hydrolysis. Cleaves endonucleolytically at the RNA exit channel of RNA polymerase (RNAP); the 5'-3' exonuclease activity of this protein degrades the nascent RNA released from RNAP. Functionally, an endoribonuclease with no apparent exonuclease activity, has low activity on single-stranded DNA (endodeoxyribonuclease, endoDNase). This Methanocaldococcus jannaschii (strain ATCC 43067 / DSM 2661 / JAL-1 / JCM 10045 / NBRC 100440) (Methanococcus jannaschii) protein is Transcription termination factor FttA.